The primary structure comprises 314 residues: Glutamyl-Q tRNA(Asp) synthetase (314 aa).

Residues 14 to 18 and Glu50 contribute to the L-glutamate site; that span reads RFAPS. The 'HIGH' region motif lies at 17–27; the sequence is PSPTGPLHVGS. Zn(2+)-binding residues include Cys106, Cys108, Tyr129, and Cys133. Residues Tyr187 and Arg205 each coordinate L-glutamate. Positions 243–247 match the 'KMSKS' region motif; sequence KLSKR. Lys246 lines the ATP pocket.

This sequence belongs to the class-I aminoacyl-tRNA synthetase family. GluQ subfamily. Zn(2+) serves as cofactor.

Functionally, catalyzes the tRNA-independent activation of glutamate in presence of ATP and the subsequent transfer of glutamate onto a tRNA(Asp). Glutamate is transferred on the 2-amino-5-(4,5-dihydroxy-2-cyclopenten-1-yl) moiety of the queuosine in the wobble position of the QUC anticodon. This Geobacter sulfurreducens (strain ATCC 51573 / DSM 12127 / PCA) protein is Glutamyl-Q tRNA(Asp) synthetase.